We begin with the raw amino-acid sequence, 556 residues long: Formate--tetrahydrofolate ligase (556 aa).

Residue 65 to 72 (TPAGEGKS) participates in ATP binding.

Belongs to the formate--tetrahydrofolate ligase family.

The catalysed reaction is (6S)-5,6,7,8-tetrahydrofolate + formate + ATP = (6R)-10-formyltetrahydrofolate + ADP + phosphate. The protein operates within one-carbon metabolism; tetrahydrofolate interconversion. This is Formate--tetrahydrofolate ligase from Streptococcus thermophilus (strain ATCC BAA-491 / LMD-9).